A 391-amino-acid polypeptide reads, in one-letter code: 3-ketoacyl-CoA thiolase (391 aa).

Residue cysteine 95 is the Acyl-thioester intermediate of the active site. Residues histidine 347 and cysteine 377 each act as proton acceptor in the active site.

Belongs to the thiolase-like superfamily. Thiolase family. As to quaternary structure, heterotetramer of two alpha chains (FadB) and two beta chains (FadA).

The protein localises to the cytoplasm. It carries out the reaction an acyl-CoA + acetyl-CoA = a 3-oxoacyl-CoA + CoA. It functions in the pathway lipid metabolism; fatty acid beta-oxidation. In terms of biological role, catalyzes the final step of fatty acid oxidation in which acetyl-CoA is released and the CoA ester of a fatty acid two carbons shorter is formed. The chain is 3-ketoacyl-CoA thiolase from Ectopseudomonas mendocina (strain ymp) (Pseudomonas mendocina).